Reading from the N-terminus, the 328-residue chain is Lipoyl synthase (328 aa).

[4Fe-4S] cluster-binding residues include C56, C61, C67, C82, C86, C89, and S293. A Radical SAM core domain is found at W68–S282.

It belongs to the radical SAM superfamily. Lipoyl synthase family. It depends on [4Fe-4S] cluster as a cofactor.

It localises to the cytoplasm. It carries out the reaction [[Fe-S] cluster scaffold protein carrying a second [4Fe-4S](2+) cluster] + N(6)-octanoyl-L-lysyl-[protein] + 2 oxidized [2Fe-2S]-[ferredoxin] + 2 S-adenosyl-L-methionine + 4 H(+) = [[Fe-S] cluster scaffold protein] + N(6)-[(R)-dihydrolipoyl]-L-lysyl-[protein] + 4 Fe(3+) + 2 hydrogen sulfide + 2 5'-deoxyadenosine + 2 L-methionine + 2 reduced [2Fe-2S]-[ferredoxin]. Its pathway is protein modification; protein lipoylation via endogenous pathway; protein N(6)-(lipoyl)lysine from octanoyl-[acyl-carrier-protein]: step 2/2. In terms of biological role, catalyzes the radical-mediated insertion of two sulfur atoms into the C-6 and C-8 positions of the octanoyl moiety bound to the lipoyl domains of lipoate-dependent enzymes, thereby converting the octanoylated domains into lipoylated derivatives. In Frankia alni (strain DSM 45986 / CECT 9034 / ACN14a), this protein is Lipoyl synthase.